The primary structure comprises 315 residues: Aspartate carbamoyltransferase catalytic subunit (315 aa).

Residues arginine 55 and threonine 56 each contribute to the carbamoyl phosphate site. Residue lysine 83 participates in L-aspartate binding. 3 residues coordinate carbamoyl phosphate: arginine 105, histidine 138, and glutamine 141. L-aspartate-binding residues include arginine 171 and arginine 225. 2 residues coordinate carbamoyl phosphate: glycine 266 and proline 267.

This sequence belongs to the aspartate/ornithine carbamoyltransferase superfamily. ATCase family. In terms of assembly, heterododecamer (2C3:3R2) of six catalytic PyrB chains organized as two trimers (C3), and six regulatory PyrI chains organized as three dimers (R2).

The enzyme catalyses carbamoyl phosphate + L-aspartate = N-carbamoyl-L-aspartate + phosphate + H(+). The protein operates within pyrimidine metabolism; UMP biosynthesis via de novo pathway; (S)-dihydroorotate from bicarbonate: step 2/3. In terms of biological role, catalyzes the condensation of carbamoyl phosphate and aspartate to form carbamoyl aspartate and inorganic phosphate, the committed step in the de novo pyrimidine nucleotide biosynthesis pathway. This chain is Aspartate carbamoyltransferase catalytic subunit, found in Mycolicibacterium gilvum (strain PYR-GCK) (Mycobacterium gilvum (strain PYR-GCK)).